Consider the following 486-residue polypeptide: Maintenance of mitochondrial morphology protein 1 (486 aa).

Over 1–20 the chain is Lumenal; it reads MNFQQSAIPPFSFLLSFTQG. The chain crosses the membrane as a helical span at residues 21 to 41; it reads FLLGQLSVVLLIGAFIKFFIF. The Cytoplasmic segment spans residues 42–486; it reads GEAPPPPSRG…GSLPDGAVGN (445 aa). Disordered regions lie at residues 70–96, 271–320, and 387–486; these read TNEAGSRSLREKPSTSNVLRPVPSSST, TPPL…SPKS, and RTGV…AVGN. Over residues 83–96 the composition is skewed to polar residues; that stretch reads STSNVLRPVPSSST. Residues 128–379 form the SMP-LTD domain; it reads QPESLDWFNV…EPRVQVVGLP (252 aa). The span at 271 to 282 shows a compositional bias: pro residues; the sequence is TPPLHTPSPSPA. Residues 292 to 306 are compositionally biased toward low complexity; that stretch reads QSQPENNSSNPNQQS. Polar residues-rich tracts occupy residues 398-407 and 440-450; these read TGSNAASRSA and DSVSRSSSFNV. Basic and acidic residues predominate over residues 460-474; sequence MTREDSRGAISDDFH.

It belongs to the MMM1 family. As to quaternary structure, homodimer. Component of the ER-mitochondria encounter structure (ERMES) or MDM complex, composed of mmm1, mdm10, mdm12 and mdm34. A mmm1 homodimer associates with one molecule of mdm12 on each side in a pairwise head-to-tail manner, and the SMP-LTD domains of mmm1 and mdm12 generate a continuous hydrophobic tunnel for phospholipid trafficking.

The protein resides in the endoplasmic reticulum membrane. Functionally, component of the ERMES/MDM complex, which serves as a molecular tether to connect the endoplasmic reticulum (ER) and mitochondria. Components of this complex are involved in the control of mitochondrial shape and protein biogenesis, and function in nonvesicular lipid trafficking between the ER and mitochondria. The mdm12-mmm1 subcomplex functions in the major beta-barrel assembly pathway that is responsible for biogenesis of all outer membrane beta-barrel proteins, and acts in a late step after the SAM complex. The mdm10-mdm12-mmm1 subcomplex further acts in the TOM40-specific pathway after the action of the mdm12-mmm1 complex. Essential for establishing and maintaining the structure of mitochondria and maintenance of mtDNA nucleoids. This chain is Maintenance of mitochondrial morphology protein 1, found in Aspergillus terreus (strain NIH 2624 / FGSC A1156).